The sequence spans 64 residues: Large ribosomal subunit protein uL30 (64 aa).

This sequence belongs to the universal ribosomal protein uL30 family. In terms of assembly, part of the 50S ribosomal subunit.

This is Large ribosomal subunit protein uL30 from Beijerinckia indica subsp. indica (strain ATCC 9039 / DSM 1715 / NCIMB 8712).